We begin with the raw amino-acid sequence, 417 residues long: D-amino acid dehydrogenase (417 aa).

3-17 contributes to the FAD binding site; that stretch reads VVILGSGVIGVTSAW.

It belongs to the DadA oxidoreductase family. The cofactor is FAD.

It carries out the reaction a D-alpha-amino acid + A + H2O = a 2-oxocarboxylate + AH2 + NH4(+). It functions in the pathway amino-acid degradation; D-alanine degradation; NH(3) and pyruvate from D-alanine: step 1/1. Its function is as follows. Oxidative deamination of D-amino acids. The protein is D-amino acid dehydrogenase of Edwardsiella ictaluri (strain 93-146).